The primary structure comprises 71 residues: Large ribosomal subunit protein bL31 (71 aa).

Residues C16, C18, C38, and C41 each coordinate Zn(2+).

It belongs to the bacterial ribosomal protein bL31 family. Type A subfamily. As to quaternary structure, part of the 50S ribosomal subunit. It depends on Zn(2+) as a cofactor.

Its function is as follows. Binds the 23S rRNA. The sequence is that of Large ribosomal subunit protein bL31 from Francisella tularensis subsp. novicida (strain U112).